We begin with the raw amino-acid sequence, 1094 residues long: Transcriptional regulator CRZ1 (1094 aa).

Disordered stretches follow at residues 1 to 29 (MADP…STSS), 44 to 81 (FNSD…LDMM), 93 to 428 (GRRQ…FPPS), and 477 to 519 (RAGA…RTLS). Composition is skewed to basic and acidic residues over residues 60–78 (QARK…KRYL) and 94–103 (RRQESLRKES). The residue at position 103 (serine 103) is a Phosphoserine. Residues 148 to 159 (PNQPQQPSQQPP) are compositionally biased toward low complexity. 2 stretches are compositionally biased toward polar residues: residues 166–187 (SEQS…QSSG) and 201–217 (GTTS…QISP). Low complexity-rich tracts occupy residues 228-241 (QPPQ…QQQQ) and 252-262 (EQQQQYAQGEG). The segment covering 286–324 (VISNTSHPSQYPSRTSSPFPQQSQSNMVPASTVNQTRTE) has biased composition (polar residues). 2 positions are modified to phosphoserine: serine 288 and serine 329. Over residues 325–342 (SFPASRSPSPFAPQQASQ) the composition is skewed to low complexity. 2 stretches are compositionally biased toward polar residues: residues 343–379 (TEAS…FNKP) and 396–412 (IVTQ…LNQP). The segment covering 477–493 (RAGAARGAQRQGPQGQG) has biased composition (low complexity). Over residues 507 to 519 (PSPQSHPLPRTLS) the composition is skewed to polar residues. Residues serine 508, serine 569, serine 765, and serine 810 each carry the phosphoserine modification. The tract at residues 835–888 (ITGDDGSLLPPSNRGHAMSHSRHSSTSSIRSASPALSISSQGSSFSHHSPRMDM) is disordered. Low complexity predominate over residues 858-881 (SSTSSIRSASPALSISSQGSSFSH). The C2H2-type 1 zinc finger occupies 944–968 (FKCPVPGCGSTFTRHFNLKGHLRSH). The C2H2-type 2; degenerate zinc-finger motif lies at 1007–1029 (FECEGCGKKFARLDALTRHHKSE). The segment at 1037–1094 (THPLPTNFDGSPMSESQYKTYKGIKSTPEGSGRRLSSTASGSGSGKRRSKKSETSEED) is disordered.

In terms of processing, phosphorylated. Dephosphorylated by calcineurin (CNA1) which promotes nuclear localization.

It is found in the cytoplasm. It localises to the cytosol. The protein resides in the nucleus. Functionally, DNA-binding transcriptional activator that interacts with calcineurin-dependent response element (CDRE) promoters. Activates expression of genes required to maintain cell wall integrity during stress. Activates expression of genes required for transepithelial migration through the host blood-brain barrier. Required for adaptation to host temperature during infection. The chain is Transcriptional regulator CRZ1 from Cryptococcus neoformans var. grubii serotype A (strain H99 / ATCC 208821 / CBS 10515 / FGSC 9487) (Filobasidiella neoformans var. grubii).